The following is a 199-amino-acid chain: Protein ZNRD2 (199 aa).

Residue Ala-2 is modified to N-acetylalanine. Residues Cys-53, Cys-56, Cys-70, and Cys-73 each contribute to the Zn(2+) site. Positions 93–148 (LSQAREHQLASSTEPASSSRPPSQPPVPRPEHCEGAAAGLKAAQAPPLPAAPPNTD) are disordered. Ser-94 bears the Phosphoserine mark. Residues 127 to 137 (GAAAGLKAAQA) are compositionally biased toward low complexity. The short motif at 173–194 (SLETSIQLCGLIRACAEALGSL) is the Nuclear export signal element.

As to quaternary structure, homodimer. The cofactor is Zn(2+). In terms of tissue distribution, expressed in the early postnatal brain.

It localises to the cytoplasm. Might play a role in mitosis. Could be a centromere-associated protein. Antigenic molecule. May induce anti-centromere antibodies. The polypeptide is Protein ZNRD2 (Znrd2) (Mus musculus (Mouse)).